Here is a 187-residue protein sequence, read N- to C-terminus: DNA-3-methyladenine glycosylase 1 (187 aa).

Positions 4, 17, 175, and 179 each coordinate Zn(2+).

The catalysed reaction is Hydrolysis of alkylated DNA, releasing 3-methyladenine.. Activity is controlled by product inhibition. Its function is as follows. Hydrolysis of the deoxyribose N-glycosidic bond to excise 3-methyladenine from the damaged DNA polymer formed by alkylation lesions. This chain is DNA-3-methyladenine glycosylase 1, found in Escherichia coli (strain K12).